The primary structure comprises 305 residues: Methionyl-tRNA formyltransferase (305 aa).

(6S)-5,6,7,8-tetrahydrofolate is bound at residue 111 to 114; that stretch reads SLLP.

The protein belongs to the Fmt family.

The catalysed reaction is L-methionyl-tRNA(fMet) + (6R)-10-formyltetrahydrofolate = N-formyl-L-methionyl-tRNA(fMet) + (6S)-5,6,7,8-tetrahydrofolate + H(+). In terms of biological role, attaches a formyl group to the free amino group of methionyl-tRNA(fMet). The formyl group appears to play a dual role in the initiator identity of N-formylmethionyl-tRNA by promoting its recognition by IF2 and preventing the misappropriation of this tRNA by the elongation apparatus. This chain is Methionyl-tRNA formyltransferase, found in Helicobacter acinonychis (strain Sheeba).